The chain runs to 123 residues: MPPKVASKGAKKAASKAKAARSGEKKKKRRRRESYSIYIYKVLKQVHPDTGISSKAMSIMNSFVNDIFERIAAEASRLAHYNKRSTITSREIQTAVRLLLPGELAKHAVSEGTKAVTKYTSSK.

A disordered region spans residues Met-1–Arg-31. A compositionally biased stretch (basic residues) spans Gly-9 to Arg-31. O-linked (GlcNAc) serine glycosylation occurs at Ser-110. Residue Lys-118 forms a Glycyl lysine isopeptide (Lys-Gly) (interchain with G-Cter in ubiquitin) linkage.

It belongs to the histone H2B family. As to quaternary structure, the nucleosome is a histone octamer containing two molecules each of H2A, H2B, H3 and H4 assembled in one H3-H4 heterotetramer and two H2A-H2B heterodimers. The octamer wraps approximately 147 bp of DNA. In terms of processing, monoubiquitination of Lys-118 gives a specific tag for epigenetic transcriptional activation and is also prerequisite for histone H3 'Lys-4' and 'Lys-79' methylation. GlcNAcylation at Ser-110 promotes monoubiquitination of Lys-118. It fluctuates in response to extracellular glucose, and associates with transcribed genes.

It is found in the nucleus. It localises to the chromosome. In terms of biological role, core component of nucleosome. Nucleosomes wrap and compact DNA into chromatin, limiting DNA accessibility to the cellular machineries which require DNA as a template. Histones thereby play a central role in transcription regulation, DNA repair, DNA replication and chromosomal stability. DNA accessibility is regulated via a complex set of post-translational modifications of histones, also called histone code, and nucleosome remodeling. This Platynereis dumerilii (Dumeril's clam worm) protein is Histone H2B.